The primary structure comprises 245 residues: MKVLDLRELNAMDKSQQTEAMTTVNLQLENMTAEHRVSWALEHLPQPAVLSSSFGIQAAVSLHLVTSQQPNIPVILTDTGYLFPETYQFIDQLTEQLKLNLKVFRAYISPAWQEARYGKLWEQGIKGIQLYNKINKVEPMNRALIQLGSLTWFAGLRRTQSSSRSKLPVLAVQQCLFKLLPIIDWDNRQVHSYLKKHGLNYHPLWEQGYLSVGDTHTTCKWTPGMNEEDTRFFGLKRECGIHEEK.

C239 (nucleophile; cysteine thiosulfonate intermediate) is an active-site residue.

This sequence belongs to the PAPS reductase family. CysH subfamily.

It localises to the cytoplasm. It catalyses the reaction [thioredoxin]-disulfide + sulfite + adenosine 3',5'-bisphosphate + 2 H(+) = [thioredoxin]-dithiol + 3'-phosphoadenylyl sulfate. It functions in the pathway sulfur metabolism; hydrogen sulfide biosynthesis; sulfite from sulfate: step 3/3. Its function is as follows. Catalyzes the formation of sulfite from phosphoadenosine 5'-phosphosulfate (PAPS) using thioredoxin as an electron donor. The sequence is that of Phosphoadenosine 5'-phosphosulfate reductase from Baumannia cicadellinicola subsp. Homalodisca coagulata.